We begin with the raw amino-acid sequence, 480 residues long: Glutamate--tRNA ligase (480 aa).

A 'HIGH' region motif is present at residues 21 to 31 (PSPTGYLHVGG). The segment covering 122 to 146 (NTQEQNKQKPRYDRHCLGDHKHSPE) has biased composition (basic and acidic residues). Residues 122–149 (NTQEQNKQKPRYDRHCLGDHKHSPEQPH) are disordered. A 'KMSKS' region motif is present at residues 248 to 252 (KLSKR). Lysine 251 contributes to the ATP binding site.

It belongs to the class-I aminoacyl-tRNA synthetase family. Glutamate--tRNA ligase type 1 subfamily. Monomer.

The protein localises to the cytoplasm. It catalyses the reaction tRNA(Glu) + L-glutamate + ATP = L-glutamyl-tRNA(Glu) + AMP + diphosphate. In terms of biological role, catalyzes the attachment of glutamate to tRNA(Glu) in a two-step reaction: glutamate is first activated by ATP to form Glu-AMP and then transferred to the acceptor end of tRNA(Glu). The protein is Glutamate--tRNA ligase of Pasteurella multocida (strain Pm70).